We begin with the raw amino-acid sequence, 106 residues long: Nucleoid-associated protein XC_3243 (106 aa).

The disordered stretch occupies residues 82 to 106 (DAESKERMGSATAGMQLPPGMKLPF).

Belongs to the YbaB/EbfC family. As to quaternary structure, homodimer.

It localises to the cytoplasm. The protein resides in the nucleoid. Binds to DNA and alters its conformation. May be involved in regulation of gene expression, nucleoid organization and DNA protection. In Xanthomonas campestris pv. campestris (strain 8004), this protein is Nucleoid-associated protein XC_3243.